Reading from the N-terminus, the 328-residue chain is Cytochrome c biogenesis protein CcsA (328 aa).

A run of 8 helical transmembrane segments spans residues 13 to 33 (ISFS…LVNL), 46 to 66 (GIVI…IYSG), 73 to 93 (LYES…VSYF), 101 to 121 (LNAI…SGLL), 146 to 166 (MILG…LLVI), 234 to 254 (IISL…VWAN), 263 to 283 (WDPK…YLHI), and 295 to 315 (AIVA…VNLL).

Belongs to the CcmF/CycK/Ccl1/NrfE/CcsA family. As to quaternary structure, may interact with Ccs1.

It localises to the plastid. The protein localises to the chloroplast thylakoid membrane. Its function is as follows. Required during biogenesis of c-type cytochromes (cytochrome c6 and cytochrome f) at the step of heme attachment. The chain is Cytochrome c biogenesis protein CcsA from Nasturtium officinale (Watercress).